The following is a 181-amino-acid chain: Adenine phosphoribosyltransferase (181 aa).

It belongs to the purine/pyrimidine phosphoribosyltransferase family. Homodimer.

It is found in the cytoplasm. The enzyme catalyses AMP + diphosphate = 5-phospho-alpha-D-ribose 1-diphosphate + adenine. It participates in purine metabolism; AMP biosynthesis via salvage pathway; AMP from adenine: step 1/1. Its function is as follows. Catalyzes a salvage reaction resulting in the formation of AMP, that is energically less costly than de novo synthesis. In Aliivibrio salmonicida (strain LFI1238) (Vibrio salmonicida (strain LFI1238)), this protein is Adenine phosphoribosyltransferase.